The following is a 2130-amino-acid chain: Dedicator of cytokinesis protein 7 (2130 aa).

Serine 30 is subject to Phosphoserine. The disordered stretch occupies residues 137-175; the sequence is GFNPNTLDKQKERQKGLPRQVFESDEAPDGSSYQDEQDD. A phosphoserine mark is found at serine 180 and serine 182. Positions 365–395 form a coiled coil; it reads FKEADATKNKEKLEKLKSQADQFCQRLGKYR. Lysine 381 is subject to N6-methyllysine. Threonine 450 bears the Phosphothreonine mark. Serine 452 carries the post-translational modification Phosphoserine. The 167-residue stretch at 561–727 folds into the C2 DOCK-type domain; that stretch reads RNLLYIYPQS…GVFNVEVVAV (167 aa). Phosphoserine occurs at positions 862, 864, 882, 888, 896, 900, and 905. Residues 888–901 are compositionally biased toward low complexity; that stretch reads SLNLNRSRSLSNSN. The disordered stretch occupies residues 888–966; that stretch reads SLNLNRSRSL…SCNRMSSHTE (79 aa). Residues threonine 907 and threonine 909 each carry the phosphothreonine modification. Phosphoserine is present on residues serine 910, serine 929, serine 963, serine 1382, serine 1420, serine 1422, serine 1424, and serine 1428. The span at 942 to 966 shows a compositional bias: polar residues; sequence SNPSPSAESTQAMDRSCNRMSSHTE. One can recognise a DOCKER domain in the interval 1668-2104; sequence KGYQTSPDLR…LQPLINRKIP (437 aa). The residue at position 1952 (lysine 1952) is an N6-acetyllysine. Residues 2076-2102 are a coiled coil; it reads DQKEYQRELERNYHRLKEALQPLINRK. Phosphoserine is present on serine 2119.

It belongs to the DOCK family. In terms of assembly, component of the DOCK7-induced septin displacement/DISP complex, at least composed of DOCK7, LRCH3 and MYO6. Interacts with TSC1. Interacts with nucleotide-free RAC1 and RAC3. Interacts with TACC3. Interacts with CRY1. Interacts with NOD2.

The protein localises to the cell projection. It localises to the axon. Functions as a guanine nucleotide exchange factor (GEF), which activates Rac1 and Rac3 Rho small GTPases by exchanging bound GDP for free GTP. Does not have a GEF activity for CDC42. Required for STMN1 'Ser-15' phosphorylation during axon formation and consequently for neuronal polarization. As part of the DISP complex, may regulate the association of septins with actin and thereby regulate the actin cytoskeleton. Has a role in pigmentation. Involved in the regulation of cortical neurogenesis through the control of radial glial cells (RGCs) proliferation versus differentiation; negatively regulates the basal-to-apical interkinetic nuclear migration of RGCs by antagonizing the microtubule growth-promoting function of TACC3. The chain is Dedicator of cytokinesis protein 7 (Dock7) from Mus musculus (Mouse).